The sequence spans 240 residues: MILYPAIDLKDGQAVRLYKGDMDKATVFNDSPAAQARAFQDAGCAWLHLVDLNGAFAGAPVNAAAVEAILAETSVPAQLGGGIRDMATIEMWLGKGIARVILGTVAVEDPELVRAAAKAFPGQVAVGLDARAGRVATRGWAEETDLMVTDLARSFEDAGVAAIIYTDIDRDGAMQGPNVAATAALARATSIPVIASGGVSSLDDLRALKASGAPLDGAISGRALYDGAIDLAEALAVLAD.

The active-site Proton acceptor is the Asp-8. Asp-129 functions as the Proton donor in the catalytic mechanism.

It belongs to the HisA/HisF family.

Its subcellular location is the cytoplasm. The catalysed reaction is 1-(5-phospho-beta-D-ribosyl)-5-[(5-phospho-beta-D-ribosylamino)methylideneamino]imidazole-4-carboxamide = 5-[(5-phospho-1-deoxy-D-ribulos-1-ylimino)methylamino]-1-(5-phospho-beta-D-ribosyl)imidazole-4-carboxamide. It participates in amino-acid biosynthesis; L-histidine biosynthesis; L-histidine from 5-phospho-alpha-D-ribose 1-diphosphate: step 4/9. The protein is 1-(5-phosphoribosyl)-5-[(5-phosphoribosylamino)methylideneamino] imidazole-4-carboxamide isomerase of Dinoroseobacter shibae (strain DSM 16493 / NCIMB 14021 / DFL 12).